Consider the following 240-residue polypeptide: tRNA pseudouridine synthase A (240 aa).

Asp-52 acts as the Nucleophile in catalysis. Tyr-110 contributes to the substrate binding site.

It belongs to the tRNA pseudouridine synthase TruA family. As to quaternary structure, homodimer.

It carries out the reaction uridine(38/39/40) in tRNA = pseudouridine(38/39/40) in tRNA. In terms of biological role, formation of pseudouridine at positions 38, 39 and 40 in the anticodon stem and loop of transfer RNAs. The sequence is that of tRNA pseudouridine synthase A from Solibacter usitatus (strain Ellin6076).